A 333-amino-acid chain; its full sequence is Foldase protein PrsA (333 aa).

The N-terminal stretch at 1-22 (MKKSTKLLAGIVTLASAMTLAA) is a signal peptide. C23 carries the N-palmitoyl cysteine lipid modification. C23 carries the S-diacylglycerol cysteine lipid modification. The PpiC domain maps to 145 to 240 (TPEMTTQVIT…NKFYIVKVTK (96 aa)). The interval 301–333 (DKKASKANTSKSDQKTSSDSSKDSQSSKSKSEK) is disordered. Over residues 312–322 (SDQKTSSDSSK) the composition is skewed to basic and acidic residues. The segment covering 323–333 (DSQSSKSKSEK) has biased composition (low complexity).

This sequence belongs to the PrsA family.

The protein resides in the cell membrane. The catalysed reaction is [protein]-peptidylproline (omega=180) = [protein]-peptidylproline (omega=0). Plays a major role in protein secretion by helping the post-translocational extracellular folding of several secreted proteins. This is Foldase protein PrsA from Streptococcus equi subsp. zooepidemicus (strain H70).